Reading from the N-terminus, the 561-residue chain is Long-chain-fatty-acid--CoA ligase (561 aa).

213-224 (YTGGTTGVAKGA) lines the ATP pocket.

The protein belongs to the ATP-dependent AMP-binding enzyme family. Requires Mg(2+) as cofactor.

It is found in the membrane. The catalysed reaction is a long-chain fatty acid + ATP + CoA = a long-chain fatty acyl-CoA + AMP + diphosphate. The protein operates within lipid metabolism; fatty acid beta-oxidation. In terms of biological role, catalyzes the esterification, concomitant with transport, of exogenous long-chain fatty acids into metabolically active CoA thioesters for subsequent degradation or incorporation into phospholipids. The chain is Long-chain-fatty-acid--CoA ligase (fadD) from Escherichia coli O6:H1 (strain CFT073 / ATCC 700928 / UPEC).